The following is a 1977-amino-acid chain: Voltage-dependent L-type calcium channel subunit alpha-1F (1977 aa).

The segment covering 1 to 11 (MSESEGGKDTT) has biased composition (basic and acidic residues). The disordered stretch occupies residues 1–60 (MSESEGGKDTTPEPSPANGAGPGPEWGLCPGPPAVEGESSGASGLGTPKRRNQHSKHKTV). Residues 1-92 (MSESEGGKDT…RSCISIVEWK (92 aa)) lie on the Cytoplasmic side of the membrane. Basic residues predominate over residues 48 to 59 (PKRRNQHSKHKT). Residues 79–375 (NPLRRSCISI…LVLGVLSGEF (297 aa)) form an I repeat. The helical transmembrane segment at 93 to 111 (PFDILILLTIFANCVALGV) threads the bilayer. Residues 112–129 (YIPFPEDDSNTANHNLEQ) are Extracellular-facing. A helical transmembrane segment spans residues 130–149 (VEYVFLVIFTVETVLKIVAY). Residues 150–161 (GLVLHPSAYIRN) lie on the Cytoplasmic side of the membrane. The chain crosses the membrane as a helical span at residues 162–180 (GWNLLDFIIVVVGLFSVLL). The Extracellular portion of the chain corresponds to 181–201 (EQGPGRPGDAPHTGGKPGGFD). The helical transmembrane segment at 202 to 220 (VKALRAFRVLRPLRLVSGV) threads the bilayer. Residues 221-239 (PSLHIVLNSIMKALVPLLH) are Cytoplasmic-facing. The chain crosses the membrane as a helical span at residues 240 to 259 (IALLVLFVIIIYAIIGLELF). At 260-347 (LGRMHKTCYF…WMQDAMGYEL (88 aa)) the chain is on the extracellular side. The N-linked (GlcNAc...) asparagine glycan is linked to Asn295. Position 330 (Glu330) interacts with Ca(2+). Residues 348-372 (PWVYFVSLVIFGSFFVLNLVLGVLS) form a helical membrane-spanning segment. Over 373–529 (GEFSKEREKA…ARCRRAVKSN (157 aa)) the chain is Cytoplasmic. The interval 395 to 412 (QQMEEDLRGYLDWITQAE) is binding to the beta subunit. 2 disordered regions span residues 418-441 (DPSA…PQLA) and 455-488 (SHST…EDEE). Residues 455-469 (SHSTRSTHSTSSHAS) show a composition bias toward low complexity. An II repeat occupies 515–761 (NRVLRARCRR…VFLAIAVDNL (247 aa)). Residues 530–549 (ACYWAVLLLVFLNTLTIASE) traverse the membrane as a helical segment. Topologically, residues 550–564 (HHGQPVWLTQIQEYA) are extracellular. The helical transmembrane segment at 565-583 (NKVLLCLFTVEMLLKLYGL) threads the bilayer. Topologically, residues 584-591 (GPSAYVSS) are cytoplasmic. A helical transmembrane segment spans residues 592–610 (FFNRFDCFVVCGGILETTL). Over 611-620 (VEVGAMQPLG) the chain is Extracellular. A helical transmembrane segment spans residues 621 to 639 (ISVLRCVRLLRIFKVTRHW). At 640 to 658 (ASLSNLVASLLNSMKSIAS) the chain is on the cytoplasmic side. The chain crosses the membrane as a helical span at residues 659–679 (LLLLLFLFIIIFSLLGMQLFG). Over 680 to 733 (GKFNFDQTHTKRSTFDTFPQALLTVFQILTGEDWNVVMYDGIMAYGGPFFPGML) the chain is Extracellular. Glu711 contacts Ca(2+). The chain crosses the membrane as a helical span at residues 734-758 (VCIYFIILFICGNYILLNVFLAIAV). Residues 759 to 871 (DNLASGDAGT…KGCHTLIHHH (113 aa)) are Cytoplasmic-facing. The tract at residues 767–830 (GTAKDKGGEK…EEEEEGAGGV (64 aa)) is disordered. Over residues 768 to 783 (TAKDKGGEKSNEKDLP) the composition is skewed to basic and acidic residues. Residues 807–826 (DMEEEEEEEEEEEEEEEEEG) are compositionally biased toward acidic residues. The III repeat unit spans residues 858–1140 (NPLRKGCHTL…IFVGFVIITF (283 aa)). The chain crosses the membrane as a helical span at residues 872–890 (VFTNLILVFIILSSVSLAA). Over 891-906 (EDPIRAHSFRNHILGY) the chain is Extracellular. Residues 907 to 926 (FDYAFTSIFTVEILLKMTVF) traverse the membrane as a helical segment. The Cytoplasmic portion of the chain corresponds to 927-938 (GAFLHRGSFCRS). The chain crosses the membrane as a helical span at residues 939–957 (WFNMLDLLVVSVSLISFGI). Residues 958 to 963 (HSSAIS) are Extracellular-facing. Residues 964–983 (VVKILRVLRVLRPLRAINRA) form a helical membrane-spanning segment. At 984 to 1002 (KGLKHVVQCVFVAIRTIGN) the chain is on the cytoplasmic side. The helical transmembrane segment at 1003-1022 (IMIVTTLLQFMFACIGVQLF) threads the bilayer. Over 1023–1112 (KGKFYTCTDE…HGPIYNYRVE (90 aa)) the chain is Extracellular. Residues 1060 to 1150 (RLWVNSDFNF…RAQGEQEYQN (91 aa)) form a dihydropyridine binding region. Glu1086 contributes to the Ca(2+) binding site. The helical transmembrane segment at 1113-1133 (ISVFFIVYIIIIAFFMMNIFV) threads the bilayer. Residues 1134–1190 (GFVIITFRAQGEQEYQNCELDKNQRQCVEYALKAQPLRRYIPKNPHQYRVWATVNSA) are Cytoplasmic-facing. The stretch at 1177–1444 (NPHQYRVWAT…LFVAVIMDNF (268 aa)) is one IV repeat. Residues 1191-1209 (AFEYLMFLLILLNTVALAM) traverse the membrane as a helical segment. At 1210–1224 (QHYEQTAPFNYAMDI) the chain is on the extracellular side. Residues 1225-1244 (LNMVFTGLFTIEMVLKIIAF) form a helical membrane-spanning segment. Residues 1245–1251 (KPKHYFT) lie on the Cytoplasmic side of the membrane. A helical membrane pass occupies residues 1252-1273 (DAWNTFDALIVVGSIVDIAVTE). Over 1274-1290 (VNNGGHLGESSEDSSRI) the chain is Extracellular. Residues 1291-1310 (SITFFRLFRVMRLVKLLSKG) form a helical membrane-spanning segment. Over 1311-1329 (EGIRTLLWTFIKSFQALPY) the chain is Cytoplasmic. The chain crosses the membrane as a helical span at residues 1330–1349 (VALLIAMIFFIYAVIGMQMF). The Extracellular portion of the chain corresponds to 1350–1416 (GKVALQDGTQ…GEEFTCGSNF (67 aa)). Residues 1397–1463 (RCDPESDFGP…LGPHHLDEFK (67 aa)) form a dihydropyridine binding region. The tract at residues 1409–1452 (EFTCGSNFAIAYFISFFMLCAFLIINLFVAVIMDNFDYLTRDWS) is phenylalkylamine binding. Residues 1417-1441 (AIAYFISFFMLCAFLIINLFVAVIM) traverse the membrane as a helical segment. Residues 1442-1977 (DNFDYLTRDW…GDEMACVHAL (536 aa)) lie on the Cytoplasmic side of the membrane. Disordered regions lie at residues 1637–1754 (CDTE…EVPD) and 1816–1841 (DLPI…WATP). Positions 1638-1657 (DTEEEEEEGQEGVEEEDEKD) are enriched in acidic residues. Composition is skewed to polar residues over residues 1661–1670 (NKATMVSQPS), 1702–1716 (TPTS…AGSN), 1733–1743 (GNSQPKGTKGQ), and 1829–1840 (SGPNRAQGSWAT).

Belongs to the calcium channel alpha-1 subunit (TC 1.A.1.11) family. CACNA1F subfamily. In terms of assembly, voltage-dependent calcium channels are multisubunit complexes, consisting of alpha-1, alpha-2, beta and delta subunits in a 1:1:1:1 ratio. The channel activity is directed by the pore-forming and voltage-sensitive alpha-1 subunit. In many cases, this subunit is sufficient to generate voltage-sensitive calcium channel activity. The auxiliary subunits beta and alpha-2/delta linked by a disulfide bridge regulate the channel activity. Interacts (via IQ domain) with CABP4; in a calcium independent manner. As to quaternary structure, interacts with CABP4; suppresses robust calcium-dependent inactivation of channel without enhancing the hyperpolarized voltage-dependent activation. Expression in skeletal muscle and retina. Isoform 4 is expressed in retina.

It is found in the membrane. The catalysed reaction is Ca(2+)(in) = Ca(2+)(out). In terms of biological role, voltage-sensitive calcium channels (VSCC) mediate the entry of calcium ions into excitable cells and are also involved in a variety of calcium-dependent processes, including muscle contraction, hormone or neurotransmitter release, gene expression, cell motility, cell division and cell death. The isoform alpha-1F gives rise to L-type calcium currents. Long-lasting (L-type) calcium channels belong to the 'high-voltage activated' (HVA) group. They are blocked by dihydropyridines (DHP), phenylalkylamines, and by benzothiazepines. Activates at more negative voltages and does not undergo calcium-dependent inactivation (CDI), due to incoming calcium ions, during depolarization. Voltage-dependent L-type calcium channel activates at more hyperpolarized voltages and exhibits a robust calcium-dependent inactivation (CDI), due to incoming calcium ions, during depolarizations. Its function is as follows. Voltage-sensitive calcium channels (VSCC) mediate the entry of calcium ions into excitable cells and are also involved in a variety of calcium-dependent processes, including muscle contraction, hormone or neurotransmitter release, gene expression, cell motility, cell division and cell death. The chain is Voltage-dependent L-type calcium channel subunit alpha-1F from Homo sapiens (Human).